A 488-amino-acid polypeptide reads, in one-letter code: UDP-N-acetylmuramoyl-L-alanyl-D-glutamate--2,6-diaminopimelate ligase (488 aa).

S31 provides a ligand contact to UDP-N-acetyl-alpha-D-muramoyl-L-alanyl-D-glutamate. Residue G109 to S115 participates in ATP binding. Residues N150, T151–T152, S178, and R186 each bind UDP-N-acetyl-alpha-D-muramoyl-L-alanyl-D-glutamate. K218 carries the post-translational modification N6-carboxylysine. Residues R384, D408–R411, G458, and E462 each bind meso-2,6-diaminopimelate. A Meso-diaminopimelate recognition motif motif is present at residues D408–R411.

The protein belongs to the MurCDEF family. MurE subfamily. Requires Mg(2+) as cofactor. Carboxylation is probably crucial for Mg(2+) binding and, consequently, for the gamma-phosphate positioning of ATP.

It localises to the cytoplasm. The catalysed reaction is UDP-N-acetyl-alpha-D-muramoyl-L-alanyl-D-glutamate + meso-2,6-diaminopimelate + ATP = UDP-N-acetyl-alpha-D-muramoyl-L-alanyl-gamma-D-glutamyl-meso-2,6-diaminopimelate + ADP + phosphate + H(+). It participates in cell wall biogenesis; peptidoglycan biosynthesis. In terms of biological role, catalyzes the addition of meso-diaminopimelic acid to the nucleotide precursor UDP-N-acetylmuramoyl-L-alanyl-D-glutamate (UMAG) in the biosynthesis of bacterial cell-wall peptidoglycan. In Bacillus licheniformis (strain ATCC 14580 / DSM 13 / JCM 2505 / CCUG 7422 / NBRC 12200 / NCIMB 9375 / NCTC 10341 / NRRL NRS-1264 / Gibson 46), this protein is UDP-N-acetylmuramoyl-L-alanyl-D-glutamate--2,6-diaminopimelate ligase.